Consider the following 124-residue polypeptide: Conotoxin Im14.2 (124 aa).

Residues 1–20 form the signal peptide; it reads MARFLSILLCFAMATGLAAG. The propeptide occupies 21–99; the sequence is IRYPDRVLGR…AENPVRDPKK (79 aa).

Contain 2 disulfide bonds. In terms of tissue distribution, expressed by the venom duct.

The protein localises to the secreted. In terms of biological role, probable neurotoxin. This is Conotoxin Im14.2 from Conus imperialis (Imperial cone).